Reading from the N-terminus, the 496-residue chain is Glycylpeptide N-tetradecanoyltransferase 1 (496 aa).

Positions 1–82 (MADESETAVK…SAQDQPVKMN (82 aa)) are disordered. Residues serine 31 and serine 47 each carry the phosphoserine modification. The segment covering 55–66 (KKKKKKQKKKKE) has biased composition (basic residues). The residue at position 83 (serine 83) is a Phosphoserine. Glutamine 118, phenylalanine 119, tryptophan 120, phenylalanine 247, leucine 248, cysteine 249, valine 250, serine 256, arginine 258, valine 259, and alanine 260 together coordinate tetradecanoyl-CoA.

Belongs to the NMT family.

It is found in the cytoplasm. The protein resides in the cytosol. It localises to the membrane. The enzyme catalyses N-terminal glycyl-[protein] + tetradecanoyl-CoA = N-tetradecanoylglycyl-[protein] + CoA + H(+). It catalyses the reaction N-terminal glycyl-L-lysyl-[protein] + tetradecanoyl-CoA = N-terminal glycyl-(N(6)-tetradecanoyl)-L-lysyl-[protein] + CoA + H(+). In terms of biological role, adds a myristoyl group to the N-terminal glycine residue of certain cellular and viral proteins. Also able to mediate N-terminal lysine myristoylation of proteins: catalyzes myristoylation of ARF6 on both 'Gly-2' and 'Lys-3'. Lysine myristoylation is required to maintain ARF6 on membranes during the GTPase cycle. In Pongo abelii (Sumatran orangutan), this protein is Glycylpeptide N-tetradecanoyltransferase 1 (NMT1).